Consider the following 287-residue polypeptide: 4-hydroxybenzoate octaprenyltransferase (287 aa).

The next 9 helical transmembrane spans lie at 22–42, 45–65, 95–115, 116–136, 140–160, 162–182, 214–234, 237–257, and 264–284; these read IGTY…SDGW, LQLL…GCVI, AINL…MLSW, STIY…FMKR, LPQL…FSEA, GEIP…TIAY, IGFL…ILAF, PYQL…LLIV, and CFQA…GIAI.

Belongs to the UbiA prenyltransferase family. The cofactor is Mg(2+).

It localises to the cell inner membrane. It carries out the reaction all-trans-octaprenyl diphosphate + 4-hydroxybenzoate = 4-hydroxy-3-(all-trans-octaprenyl)benzoate + diphosphate. Its pathway is cofactor biosynthesis; ubiquinone biosynthesis. In terms of biological role, catalyzes the prenylation of para-hydroxybenzoate (PHB) with an all-trans polyprenyl group. Mediates the second step in the final reaction sequence of ubiquinone-8 (UQ-8) biosynthesis, which is the condensation of the polyisoprenoid side chain with PHB, generating the first membrane-bound Q intermediate 3-octaprenyl-4-hydroxybenzoate. The chain is 4-hydroxybenzoate octaprenyltransferase from Colwellia psychrerythraea (strain 34H / ATCC BAA-681) (Vibrio psychroerythus).